Consider the following 385-residue polypeptide: MTWPGGKDIVDQIFDAGYWLVSKSAVLGDEIKNHVEKSIESISEKMSNKETPRLQESNSNKFKAYKTLRIGFQDHWKLGLGISATSLCLYLGYRTFFKLPPYLPEAESQVVLILGDMNDPIIRNQVMDLYRRRFTVYICTENADVYKKHEEDQDFVYYIDPTCEEDFEAFFLDVPRLASILFMPRLSYHPSGAISCDSLESEIHSSILVYHQALLTIIPHLKRNTQLIMFNPSLTAELNLVHHSTEIIMSSIIDSLFRIFKNYRRLNVSMIKLGILQIGSQPSNYKFLTMAGSDIHEALHYPVYKMIMSANGYKLRQLLSWLTTWGGCNSVYHCGRFSYLISWPFASLIYNHRTRFSLKRLKKNLTKAYNSIISILPQSSSKSSK.

It belongs to the UPF0744 family.

The protein is UPF0744 protein YSD83 (YSD83) of Saccharomyces paradoxus (Yeast).